The chain runs to 124 residues: Ribonuclease pancreatic (124 aa).

A compositionally biased stretch (basic and acidic residues) spans 1-13 (KETAAAKFERQHM). The segment at 1–22 (KETAAAKFERQHMDSSTSAASS) is disordered. Positions 7 and 10 each coordinate substrate. His12 (proton acceptor) is an active-site residue. 4 cysteine pairs are disulfide-bonded: Cys26/Cys84, Cys40/Cys95, Cys58/Cys110, and Cys65/Cys72. N-linked (GlcNAc...) asparagine glycosylation is present at Asn34. Substrate contacts are provided by residues 41 to 45 (KPVNT), Lys66, and Arg85. The Proton donor role is filled by His119.

It belongs to the pancreatic ribonuclease family. In terms of assembly, monomer. Interacts with and forms tight 1:1 complexes with RNH1. Dimerization of two such complexes may occur. Interaction with RNH1 inhibits this protein. As to expression, pancreas.

The protein localises to the secreted. The catalysed reaction is an [RNA] containing cytidine + H2O = an [RNA]-3'-cytidine-3'-phosphate + a 5'-hydroxy-ribonucleotide-3'-[RNA].. It catalyses the reaction an [RNA] containing uridine + H2O = an [RNA]-3'-uridine-3'-phosphate + a 5'-hydroxy-ribonucleotide-3'-[RNA].. Its function is as follows. Endonuclease that catalyzes the cleavage of RNA on the 3' side of pyrimidine nucleotides. Acts on single-stranded and double-stranded RNA. The protein is Ribonuclease pancreatic (RNASE1) of Bison bison (American bison).